A 143-amino-acid chain; its full sequence is ATP synthase subunit b' (143 aa).

Residues 6–26 traverse the membrane as a helical segment; it reads ATLPLMALQFVVLAFLLNAIF.

The protein belongs to the ATPase B chain family. As to quaternary structure, F-type ATPases have 2 components, F(1) - the catalytic core - and F(0) - the membrane proton channel. F(1) has five subunits: alpha(3), beta(3), gamma(1), delta(1), epsilon(1). F(0) has four main subunits: a(1), b(1), b'(1) and c(10-14). The alpha and beta chains form an alternating ring which encloses part of the gamma chain. F(1) is attached to F(0) by a central stalk formed by the gamma and epsilon chains, while a peripheral stalk is formed by the delta, b and b' chains.

It localises to the cellular thylakoid membrane. In terms of biological role, f(1)F(0) ATP synthase produces ATP from ADP in the presence of a proton or sodium gradient. F-type ATPases consist of two structural domains, F(1) containing the extramembraneous catalytic core and F(0) containing the membrane proton channel, linked together by a central stalk and a peripheral stalk. During catalysis, ATP synthesis in the catalytic domain of F(1) is coupled via a rotary mechanism of the central stalk subunits to proton translocation. Component of the F(0) channel, it forms part of the peripheral stalk, linking F(1) to F(0). The b'-subunit is a diverged and duplicated form of b found in plants and photosynthetic bacteria. This chain is ATP synthase subunit b', found in Synechocystis sp. (strain ATCC 27184 / PCC 6803 / Kazusa).